The sequence spans 1195 residues: Error-prone DNA polymerase (1195 aa).

Residues 1163-1195 (ALNGDRRDTPDAPAQRHRHPRDVRILPPSRDFH) are disordered.

It belongs to the DNA polymerase type-C family. DnaE2 subfamily.

It localises to the cytoplasm. It catalyses the reaction DNA(n) + a 2'-deoxyribonucleoside 5'-triphosphate = DNA(n+1) + diphosphate. Functionally, DNA polymerase involved in damage-induced mutagenesis and translesion synthesis (TLS). It is not the major replicative DNA polymerase. In Rhodopseudomonas palustris (strain ATCC BAA-98 / CGA009), this protein is Error-prone DNA polymerase.